The primary structure comprises 303 residues: UDP-3-O-acyl-N-acetylglucosamine deacetylase (303 aa).

3 residues coordinate Zn(2+): His-78, His-237, and Asp-241. His-264 functions as the Proton donor in the catalytic mechanism.

This sequence belongs to the LpxC family. Requires Zn(2+) as cofactor.

The enzyme catalyses a UDP-3-O-[(3R)-3-hydroxyacyl]-N-acetyl-alpha-D-glucosamine + H2O = a UDP-3-O-[(3R)-3-hydroxyacyl]-alpha-D-glucosamine + acetate. It participates in glycolipid biosynthesis; lipid IV(A) biosynthesis; lipid IV(A) from (3R)-3-hydroxytetradecanoyl-[acyl-carrier-protein] and UDP-N-acetyl-alpha-D-glucosamine: step 2/6. In terms of biological role, catalyzes the hydrolysis of UDP-3-O-myristoyl-N-acetylglucosamine to form UDP-3-O-myristoylglucosamine and acetate, the committed step in lipid A biosynthesis. This Xanthomonas oryzae pv. oryzae (strain MAFF 311018) protein is UDP-3-O-acyl-N-acetylglucosamine deacetylase.